Here is a 460-residue protein sequence, read N- to C-terminus: ATP synthase subunit beta (460 aa).

150–157 (GGAGVGKT) contacts ATP.

Belongs to the ATPase alpha/beta chains family. F-type ATPases have 2 components, CF(1) - the catalytic core - and CF(0) - the membrane proton channel. CF(1) has five subunits: alpha(3), beta(3), gamma(1), delta(1), epsilon(1). CF(0) has three main subunits: a(1), b(2) and c(9-12). The alpha and beta chains form an alternating ring which encloses part of the gamma chain. CF(1) is attached to CF(0) by a central stalk formed by the gamma and epsilon chains, while a peripheral stalk is formed by the delta and b chains.

It localises to the cell inner membrane. It catalyses the reaction ATP + H2O + 4 H(+)(in) = ADP + phosphate + 5 H(+)(out). Produces ATP from ADP in the presence of a proton gradient across the membrane. The catalytic sites are hosted primarily by the beta subunits. This Salmonella gallinarum (strain 287/91 / NCTC 13346) protein is ATP synthase subunit beta.